An 827-amino-acid polypeptide reads, in one-letter code: MHFTKLDDSPMFRKQLQSMEESAEILRERSLKFYKGCRKYTEGLGEAYDGDIAFASALETFGGGHNDPISVAFGGPVMTKFTIALREIGTYKEVLRSQVEHILNDRLLQFANMDLHEVKEARKRFDKASLTYDQAREKFLSLRKGTKSDVAAALEQELHTSRSMFEQARFNLVTALSNVEAKKRFEFLEAVSGTMDAHLRYFKQGYELLHQMEPYINQVLTYAQQSRERSNYEQAALNEKMQEYKRQVDRESRWGSNGSNGSPNGDGIQAIGRSSHKMIDAVMQSAARGKVQTIRQGYLSKRSSNLRGDWKRRFFVLDSRGMLYYYRKQCSKPSGSGSQLSGQRNSSELGSGLLSRWLSSNNHGHGGVHDEKSVARHTVNLLTSTIKVDADQSDLRFCFRIISPTKNYTLQAESALDQMDWIEKITGVIASLLSSQVPEQRLPGSPMGSGHHRSASESSSYESSEYDHPTTEEFVCERSFLGYNERPSRSFQPQRSIRKGEKPIDALRKVCGNDKCADCGAPEPDWASLNLGVLVCIECSGVHRNLGVHISKVRSLTLDVKVWEPSVISLFQALGNTFANTVWEELLHSRSAIHFDPGLTVSDKSRVMVTGKPSYADMISIKEKYIQAKYAEKLFVRRSRDSDFPQSAAQQMWDAVSGNDKKAVYRLIVNGDADVNYVYDQTSSSSLTLSRVILVPERPKREDVLLRLRNELLDRTGSSSNISPEGSGGSSLLHCACEKADLGMVELLLQYGANVNASDSSGQTPLHCCLLRGKVTIARLLLTRGADPEAMNREGKTALDIAAESNFTDPEVLALLSDTNGYNHRQC.

The 225-residue stretch at 1–225 folds into the BAR domain; the sequence is MHFTKLDDSP…INQVLTYAQQ (225 aa). Coiled-coil stretches lie at residues 116-139 and 223-253; these read HEVKEARKRFDKASLTYDQAREKF and AQQSRERSNYEQAALNEKMQEYKRQVDRESR. The disordered stretch occupies residues 246–269; that stretch reads RQVDRESRWGSNGSNGSPNGDGIQ. Low complexity predominate over residues 255–267; it reads GSNGSNGSPNGDG. The PH domain maps to 292–430; sequence QTIRQGYLSK…WIEKITGVIA (139 aa). A disordered region spans residues 439–467; sequence EQRLPGSPMGSGHHRSASESSSYESSEYD. A Phosphoserine modification is found at S445. An Arf-GAP domain is found at 501–643; it reads EKPIDALRKV…LFVRRSRDSD (143 aa). The C4-type zinc finger occupies 516–539; that stretch reads CADCGAPEPDWASLNLGVLVCIEC. ANK repeat units follow at residues 728 to 757, 761 to 790, and 794 to 825; these read GGSSLLHCACEKADLGMVELLLQYGANVNA, SGQTPLHCCLLRGKVTIARLLLTRGADPEA, and EGKTALDIAAESNFTDPEVLALLSDTNGYNHR.

In terms of assembly, homodimer. Interacts with DRP1A. Interacts with VAB. In terms of tissue distribution, broadly expressed. Detected in developing veins of the leaf and root. Detected in roots, hypocotyls, cotyledons, leaves, siliques and shoot apical meristems.

Its subcellular location is the golgi apparatus. The protein resides in the trans-Golgi network. With respect to regulation, ARF GAP activity strongly enhanced by phosphatidylinositol 4-monophosphate (PIP) and moderately enhanced by phosphatidylinositol 4,5-bisphosphate (PIP2). GTPase-activating protein (GAP) for ADP ribosylation factor (ARF). Involved in the spatial control of provascular differentiation. Required for the formation of the normal pattern of continuous secondary veins. Involved in auxin signaling but not in polar auxin transport or in auxin responses. Required for PIN1 internalization in roots. In Arabidopsis thaliana (Mouse-ear cress), this protein is ADP-ribosylation factor GTPase-activating protein AGD3 (AGD3).